Reading from the N-terminus, the 743-residue chain is Peptide transporter family 1 (743 aa).

Positions 1–28 (MASEITNGKNGQNGKNGQKEESDSQIAP) are disordered. Positions 7 to 16 (NGKNGQNGKN) are enriched in low complexity. 10 consecutive transmembrane segments (helical) span residues 74–94 (VLFH…ALIA), 104–124 (ILYL…GAVP), 132–152 (AVTV…KPCV), 173–193 (FSLF…FTPI), 207–227 (FSLA…IFMA), 334–354 (VVNP…IYPA), 364–384 (LQKL…SAGL), 597–619 (LPQI…EFSY), 629–649 (VLQA…VVIA), and 659–679 (GEFT…LWLA).

The protein belongs to the major facilitator superfamily. Proton-dependent oligopeptide transporter (POT/PTR) (TC 2.A.17) family. Expressed in thorax and abdomen of females: apical epithelial membranes of midgut, rectum, and reproductive tract. Also expressed in neuropil of the central nervous system, with elevated expression within the alpha- and beta-lobes of the mushroom bodies.

It is found in the membrane. In terms of biological role, important role in absorption of dietary peptides. High-affinity transporter of alanylalanine. Dipeptide transport activity is proton dependent. The polypeptide is Peptide transporter family 1 (yin) (Drosophila melanogaster (Fruit fly)).